The following is a 452-amino-acid chain: Trigger factor (452 aa).

The PPIase FKBP-type domain maps to 171 to 256; that stretch reads GDRVTISFKG…ATKVEAPQDT (86 aa).

Belongs to the FKBP-type PPIase family. Tig subfamily.

It localises to the cytoplasm. The enzyme catalyses [protein]-peptidylproline (omega=180) = [protein]-peptidylproline (omega=0). Involved in protein export. Acts as a chaperone by maintaining the newly synthesized protein in an open conformation. Functions as a peptidyl-prolyl cis-trans isomerase. The sequence is that of Trigger factor from Rhodopseudomonas palustris (strain HaA2).